The chain runs to 443 residues: ATP-dependent protease ATPase subunit HslU (443 aa).

Residues Ile18 and 60-65 (GVGKTE) contribute to the ATP site. The interval 138-158 (PAENQWGEKEQNEDKGTRQTF) is disordered. Basic and acidic residues predominate over residues 143-154 (WGEKEQNEDKGT). ATP-binding residues include Asp255, Glu321, and Arg393.

It belongs to the ClpX chaperone family. HslU subfamily. A double ring-shaped homohexamer of HslV is capped on each side by a ring-shaped HslU homohexamer. The assembly of the HslU/HslV complex is dependent on binding of ATP.

The protein resides in the cytoplasm. Functionally, ATPase subunit of a proteasome-like degradation complex; this subunit has chaperone activity. The binding of ATP and its subsequent hydrolysis by HslU are essential for unfolding of protein substrates subsequently hydrolyzed by HslV. HslU recognizes the N-terminal part of its protein substrates and unfolds these before they are guided to HslV for hydrolysis. The chain is ATP-dependent protease ATPase subunit HslU from Pseudoalteromonas atlantica (strain T6c / ATCC BAA-1087).